We begin with the raw amino-acid sequence, 209 residues long: FAS-associated death domain protein (209 aa).

Positions 3-81 (PFLVLLHSVS…RKDLLLRLDD (79 aa)) constitute a DED domain. The region spanning 97 to 181 (LRAAMEIICD…VVADLIEEDQ (85 aa)) is the Death domain. A compositionally biased stretch (polar residues) spans 187–200 (QSGSANPGSFTAWD). Residues 187-209 (QSGSANPGSFTAWDSGSAAPGAS) form a disordered region.

Can self-associate. Component of the AIM2 PANoptosome complex, a multiprotein complex that drives inflammatory cell death (PANoptosis). Component of the death-induced signaling complex (DISC) composed of cell surface receptor FAS/CD95 or TNFRSF1A, adapter protein FADD and the CASP8 protease; recruitment of CASP8 to the complex is required for processing of CASP8 into the p18 and p10 subunits. Interacts (via death domain) with FAS (via death domain). Interacts directly (via DED domain) with NOL3 (via CARD domain); inhibits death-inducing signaling complex (DISC) assembly by inhibiting the increase in FAS-FADD binding induced by FAS activation. Interacts with CFLAR, PEA15 and MBD4. When phosphorylated, part of a complex containing HIPK3 and FAS. May interact with MAVS/IPS1. Interacts with MOCV v-CFLAR protein and PIDD1. Interacts with RIPK1 and TRADD. Interacts with stimulated TNFRSF10B. Interacts with DDX24. In terms of processing, phosphorylated.

Its subcellular location is the cytoplasm. Its function is as follows. Apoptotic adapter molecule that recruits caspases CASP8 or CASP10 to the activated FAS/CD95 or TNFRSF1A/TNFR-1 receptors. The resulting aggregate called the death-inducing signaling complex (DISC) performs CASP8 proteolytic activation. Active CASP8 initiates the subsequent cascade of caspases mediating apoptosis. Involved in interferon-mediated antiviral immune response, playing a role in the positive regulation of interferon signaling. This is FAS-associated death domain protein from Bos taurus (Bovine).